A 192-amino-acid polypeptide reads, in one-letter code: Visinin (192 aa).

Gly2 is lipidated: N-myristoyl glycine. EF-hand domains are found at residues 24–59 (TEEE…FFPN), 61–96 (EPQG…TSSG), 97–132 (KTHL…IFKM), and 146–181 (NSPQ…KNDA). Residues Asp74, Asn76, Asp78, Thr80, Glu85, Asp110, Asp112, Asn114, Glu116, Glu121, Asn164, Lys166, and Glu171 each coordinate Ca(2+).

It belongs to the recoverin family. In terms of tissue distribution, retinal cell specific protein.

Functionally, seems to be implicated in the pathway from retinal rod guanylate cyclase to rhodopsin. May be involved in the blocking of the phosphorylation of rhodopsin. In Gallus gallus (Chicken), this protein is Visinin.